A 397-amino-acid polypeptide reads, in one-letter code: Elongation factor Tu (397 aa).

In terms of domain architecture, tr-type G spans 10–206 (KPHVNIGTIG…AVDESIPEPQ (197 aa)). Residues 19 to 26 (GHIDHGKT) form a G1 region. GTP is bound at residue 19–26 (GHIDHGKT). A Mg(2+)-binding site is contributed by Thr-26. The interval 62–66 (GITIS) is G2. The tract at residues 83–86 (DCPG) is G3. GTP-binding positions include 83–87 (DCPGH) and 138–141 (NKAD). The segment at 138 to 141 (NKAD) is G4. Positions 176–178 (SAL) are G5.

This sequence belongs to the TRAFAC class translation factor GTPase superfamily. Classic translation factor GTPase family. EF-Tu/EF-1A subfamily. In terms of assembly, monomer.

The protein localises to the cytoplasm. It catalyses the reaction GTP + H2O = GDP + phosphate + H(+). Its function is as follows. GTP hydrolase that promotes the GTP-dependent binding of aminoacyl-tRNA to the A-site of ribosomes during protein biosynthesis. The protein is Elongation factor Tu of Frankia casuarinae (strain DSM 45818 / CECT 9043 / HFP020203 / CcI3).